The primary structure comprises 327 residues: Sphingomyelinase D (327 aa).

The signal sequence occupies residues 1–23 (MQPLTRTICALFCLLLTLPLTFG). The active site involves histidine 52. Residues glutamate 72, aspartate 74, and aspartate 117 each coordinate Mg(2+). The short motif at 320 to 327 (VTGADKLW) is the SMD-tail element.

It belongs to the sphingomyelinase D/phospholipase D family. Requires Mg(2+) as cofactor.

Its subcellular location is the secreted. The enzyme catalyses a sphingomyelin + H2O = an N-acylsphing-4-enine 1-phosphate + choline + H(+). Functionally, catalyzes the hydrolysis of sphingomyelin. Sphingomyelinases D are produced by some spider in their venoms, but also by arthropods such as ticks, or pathogenic bacteria and fungi. They might play a role in pathogenicity through different mechanisms, such as membrane destabilization and host cell penetration, but also pulmonary inflammation and cutaneous lesions. The sequence is that of Sphingomyelinase D from Paracoccidioides brasiliensis (strain Pb03).